We begin with the raw amino-acid sequence, 510 residues long: 2,3-bisphosphoglycerate-independent phosphoglycerate mutase (510 aa).

Mn(2+)-binding residues include aspartate 12 and serine 62. Serine 62 serves as the catalytic Phosphoserine intermediate. Substrate is bound by residues histidine 123, 153 to 154 (RD), arginine 185, arginine 191, 261 to 264 (RPDR), and lysine 336. Aspartate 403, histidine 407, aspartate 444, histidine 445, and histidine 462 together coordinate Mn(2+).

It belongs to the BPG-independent phosphoglycerate mutase family. In terms of assembly, monomer. The cofactor is Mn(2+).

The catalysed reaction is (2R)-2-phosphoglycerate = (2R)-3-phosphoglycerate. It functions in the pathway carbohydrate degradation; glycolysis; pyruvate from D-glyceraldehyde 3-phosphate: step 3/5. In terms of biological role, essential for rapid growth and for sporulation. Catalyzes the interconversion of 2-phosphoglycerate and 3-phosphoglycerate. This chain is 2,3-bisphosphoglycerate-independent phosphoglycerate mutase, found in Priestia megaterium (strain ATCC 12872 / QMB1551) (Bacillus megaterium).